We begin with the raw amino-acid sequence, 78 residues long: Major outer membrane lipoprotein Lpp (78 aa).

The first 20 residues, Met-1–Gly-20, serve as a signal peptide directing secretion. Cys-21 carries N-palmitoyl cysteine lipidation. A lipid anchor (S-diacylglycerol cysteine) is attached at Cys-21. Repeats lie at residues Asn-24–Val-34 and Asn-38–Val-48. The stretch at Ile-27–Thr-75 forms a coiled coil. Lys-78 bears the N6-murein peptidoglycan lysine mark.

The protein belongs to the Lpp family. In terms of assembly, homotrimer.

The protein resides in the cell outer membrane. Its subcellular location is the secreted. It is found in the cell wall. In terms of biological role, a highly abundant outer membrane lipoprotein that controls the distance between the inner and outer membranes. The only protein known to be covalently linked to the peptidoglycan network (PGN). Also non-covalently binds the PGN. The link between the cell outer membrane and PGN contributes to maintenance of the structural and functional integrity of the cell envelope, and maintains the correct distance between the PGN and the outer membrane. The sequence is that of Major outer membrane lipoprotein Lpp from Pectobacterium atrosepticum (strain SCRI 1043 / ATCC BAA-672) (Erwinia carotovora subsp. atroseptica).